Here is a 286-residue protein sequence, read N- to C-terminus: Bifunctional protein FolD (286 aa).

NADP(+)-binding positions include 168-170, T195, and V236; that span reads GRG.

It belongs to the tetrahydrofolate dehydrogenase/cyclohydrolase family. In terms of assembly, homodimer.

The enzyme catalyses (6R)-5,10-methylene-5,6,7,8-tetrahydrofolate + NADP(+) = (6R)-5,10-methenyltetrahydrofolate + NADPH. It catalyses the reaction (6R)-5,10-methenyltetrahydrofolate + H2O = (6R)-10-formyltetrahydrofolate + H(+). Its pathway is one-carbon metabolism; tetrahydrofolate interconversion. In terms of biological role, catalyzes the oxidation of 5,10-methylenetetrahydrofolate to 5,10-methenyltetrahydrofolate and then the hydrolysis of 5,10-methenyltetrahydrofolate to 10-formyltetrahydrofolate. This chain is Bifunctional protein FolD, found in Mycolicibacterium fortuitum (Mycobacterium fortuitum).